Reading from the N-terminus, the 609-residue chain is PTS system beta-glucoside-specific EIIBCA component (609 aa).

Positions 1–86 (MDYDKLSKDI…VRHSNLSDEK (86 aa)) constitute a PTS EIIB type-1 domain. The Phosphocysteine intermediate; for EIIB activity role is filled by Cys-26. Residues 103-459 (DVISGVFTPI…GSQQPAVHEG (357 aa)) enclose the PTS EIIC type-1 domain. 10 helical membrane-spanning segments follow: residues 112-132 (ILPAIAGAGMIKGLVALAVTF), 141-161 (VHVILTAVGDGAFYFLPLLLA), 174-194 (VAAAIAAAILHPDLTALLGAG), 202-222 (LPVTAATYSSTVIPILLSIWI), 246-266 (FTLLIVVPLTLITVGPLGAIL), 281-301 (AGLVAMILLAGTFSLIIMTGM), 321-341 (LLPAMFLANMGQAGASFAVFL), 351-371 (LALTTSITALMGITEPAMYGV), 379-399 (FAAALIGGAAGGAFYGMTGVA), and 412-432 (IPVFIGPTFIYAMIGLVIAFA). Positions 480–584 (DGVFSAGVMG…DVITPVIVTN (105 aa)) constitute a PTS EIIA type-1 domain. His-532 (tele-phosphohistidine intermediate; for EIIA activity) is an active-site residue.

Its subcellular location is the cell membrane. Its function is as follows. The phosphoenolpyruvate-dependent sugar phosphotransferase system (sugar PTS), a major carbohydrate active -transport system, catalyzes the phosphorylation of incoming sugar substrates concomitantly with their translocation across the cell membrane. This system is involved in beta-glucoside transport. In Bacillus subtilis (strain 168), this protein is PTS system beta-glucoside-specific EIIBCA component (bglP).